Here is a 561-residue protein sequence, read N- to C-terminus: Serine palmitoyltransferase 2 (561 aa).

The chain crosses the membrane as a helical span at residues 57–77; that stretch reads PYYISLLTYLNYLILIILGHV. At Lys-366 the chain carries N6-(pyridoxal phosphate)lysine. Residues 443 to 463 form a helical membrane-spanning segment; the sequence is LGFIVYGVADSPVIPLLLYCP.

Belongs to the class-II pyridoxal-phosphate-dependent aminotransferase family. LCB1 and LCB2 encode essential subunits of the enzyme and form a heterodimer. Component of the SPOTS complex, at least composed of LCB1/2 (LCB1 and/or LCB2), ORM1/2 (ORM1 and/or ORM2), SAC1 and TSC3. Interacts with LCB1 and TSC3. The cofactor is pyridoxal 5'-phosphate.

The protein resides in the cytoplasm. It localises to the endoplasmic reticulum. The protein localises to the membrane. The catalysed reaction is L-serine + hexadecanoyl-CoA + H(+) = 3-oxosphinganine + CO2 + CoA. The protein operates within lipid metabolism; sphingolipid metabolism. Functionally, catalytic subunit of serine palmitoyltransferase (SPT), which catalyzes the committed step in the synthesis of sphingolipids, the condensation of serine with palmitoyl CoA to form the long chain base 3-ketosphinganine. This is Serine palmitoyltransferase 2 (LCB2) from Saccharomyces cerevisiae (strain ATCC 204508 / S288c) (Baker's yeast).